Here is a 333-residue protein sequence, read N- to C-terminus: NADH dehydrogenase (ubiquinone) complex I, assembly factor 6 (333 aa).

The transit peptide at 1 to 44 (MATSMLGSVPGPRPFGLAGLFRRRPPRDPWERVRRLPRLSAVRR) directs the protein to the mitochondrion.

The protein belongs to the NDUFAF6 family.

It is found in the mitochondrion inner membrane. Functionally, involved in the assembly of mitochondrial NADH:ubiquinone oxidoreductase complex (complex I) at early stages. May play a role in the biogenesis of complex I subunit MT-ND1. This Rattus norvegicus (Rat) protein is NADH dehydrogenase (ubiquinone) complex I, assembly factor 6 (Ndufaf6).